The chain runs to 146 residues: Cytochrome b5 type B (146 aa).

The propeptide occupies 1 to 11 (MATPEASGSGR). Residues 20-96 (VTYYRLEEVA…LKQYYIGDVH (77 aa)) enclose the Cytochrome b5 heme-binding domain. K30 carries the post-translational modification N6-acetyllysine. Heme is bound by residues H55 and H79. Residue S80 is modified to Phosphoserine. Residues 119-136 (WAYWIVPIVGAILIGFLY) traverse the membrane as a helical segment.

This sequence belongs to the cytochrome b5 family. As to quaternary structure, component of a complex composed of cytochrome b5, NADH-cytochrome b5 reductase (CYB5R3) and MTARC2.

It is found in the mitochondrion outer membrane. Cytochrome b5 is a membrane-bound hemoprotein functioning as an electron carrier for several membrane-bound oxygenases. The sequence is that of Cytochrome b5 type B (Cyb5b) from Rattus norvegicus (Rat).